The following is a 294-amino-acid chain: Diphthine synthase (294 aa).

S-adenosyl-L-methionine-binding positions include Asp93, Val96, 121–122 (SG), Leu173, and Ala220.

Belongs to the diphthine synthase family. Homodimer.

The catalysed reaction is 2-[(3S)-amino-3-carboxypropyl]-L-histidyl-[translation elongation factor 2] + 3 S-adenosyl-L-methionine = diphthine-[translation elongation factor 2] + 3 S-adenosyl-L-homocysteine + 3 H(+). The protein operates within protein modification; peptidyl-diphthamide biosynthesis. In terms of biological role, S-adenosyl-L-methionine-dependent methyltransferase that catalyzes the trimethylation of the amino group of the modified target histidine residue in translation elongation factor 2 (EF-2), to form an intermediate called diphthine. The three successive methylation reactions represent the second step of diphthamide biosynthesis. The protein is Diphthine synthase (dphB) of Aeropyrum pernix (strain ATCC 700893 / DSM 11879 / JCM 9820 / NBRC 100138 / K1).